Reading from the N-terminus, the 211-residue chain is Large ribosomal subunit protein bL25 (211 aa).

The segment at 186–211 (GRALQSMDAAESAVEQPGEQPATAAG) is disordered.

It belongs to the bacterial ribosomal protein bL25 family. CTC subfamily. In terms of assembly, part of the 50S ribosomal subunit; part of the 5S rRNA/L5/L18/L25 subcomplex. Contacts the 5S rRNA. Binds to the 5S rRNA independently of L5 and L18.

Functionally, this is one of the proteins that binds to the 5S RNA in the ribosome where it forms part of the central protuberance. This is Large ribosomal subunit protein bL25 from Gloeobacter violaceus (strain ATCC 29082 / PCC 7421).